The primary structure comprises 309 residues: MQCIETNNLQQLLEQVKPYTKKGKLATYIPELGNANPNDLGIAIFHKETEYIHAGNSQTLFTLQSISKVITLALALLDRGEEYVFSKVGMEPTGDPFNSIIKLETTSSSKPLNPMINAGALAITSMLAGNDNEEKMERILQFVRDITDNPTISYSSKVATSELETAYLNRSLCYYMKQNGIIDNDIEELMDLYTRQCAIEVNCIDLARIGLIFAMDGYDPYKKKQIIPKHITKICKTFMVTCGMYNESGEFAIRVGIPAKSGVAGGIFGCVKGEMGIGIFGPALDANGNSIAGFKILELLSAQEGWSMF.

Substrate-binding residues include Ser-65, Asn-117, Glu-162, Asn-169, Tyr-193, Tyr-245, and Val-263.

The protein belongs to the glutaminase family. Homotetramer.

It carries out the reaction L-glutamine + H2O = L-glutamate + NH4(+). The protein is Glutaminase of Bacillus mycoides (strain KBAB4) (Bacillus weihenstephanensis).